A 123-amino-acid chain; its full sequence is PTS system glucitol/sorbitol-specific EIIA component (123 aa).

The PTS EIIA type-5 domain occupies 1–116 (MTVIYQTTIT…PDDIAPGSVL (116 aa)). The Tele-phosphohistidine intermediate role is filled by His43. The residue at position 43 (His43) is a Phosphohistidine; by HPr.

It localises to the cytoplasm. Its function is as follows. The phosphoenolpyruvate-dependent sugar phosphotransferase system (sugar PTS), a major carbohydrate active transport system, catalyzes the phosphorylation of incoming sugar substrates concomitantly with their translocation across the cell membrane. The enzyme II complex composed of SrlA, SrlB and SrlE is involved in glucitol/sorbitol transport. This chain is PTS system glucitol/sorbitol-specific EIIA component (srlB), found in Shigella flexneri.